Consider the following 156-residue polypeptide: Arginine repressor (156 aa).

This sequence belongs to the ArgR family.

It localises to the cytoplasm. It participates in amino-acid biosynthesis; L-arginine biosynthesis [regulation]. Functionally, regulates arginine biosynthesis genes. The sequence is that of Arginine repressor from Salmonella paratyphi C (strain RKS4594).